We begin with the raw amino-acid sequence, 505 residues long: OVARIAN TUMOR DOMAIN-containing deubiquitinating enzyme 6 (505 aa).

The tract at residues 1 to 191 (MTRILVQRGS…NSSDEHMPCY (191 aa)) is disordered. A compositionally biased stretch (low complexity) spans 9–30 (GSSGSSSNSSRPSSSSSSSSGS). Residues 51 to 72 (DEKQEEVTVVEKAECSDAKDVA) show a composition bias toward basic and acidic residues. The segment covering 73–86 (VDSDEPADREDDEG) has biased composition (acidic residues). Residues 115–124 (PPVPAPPPKP) are compositionally biased toward pro residues. A compositionally biased stretch (low complexity) spans 159–173 (SSRSSPTGSHPSSPR). Over residues 174–188 (SHSENEGYNSSDEHM) the composition is skewed to basic and acidic residues. The region spanning 216–339 (FEIRRMLEDG…GNHYNSLVDP (124 aa)) is the OTU domain. Asp-224 is a catalytic residue. The active-site Nucleophile is the Cys-227. Residue His-332 is part of the active site. Residues 416–447 (RIGPKESSTSNAETSSSGARPSGSDSKPAEAV) form a disordered region. Residues 421–441 (ESSTSNAETSSSGARPSGSDS) are compositionally biased toward low complexity. A UBA domain is found at 446–491 (AVKEKTVLSSSIEMVLSMGFSYAQAMEAYSIFGDDVDSMVCYVLET).

Belongs to the peptidase C85 family. As to quaternary structure, interacts with KDM1C. Mostly expressed in stems flowers and siliques, and, to a lower extent, in leaves, roots and seedlings.

Its subcellular location is the nucleus. The protein localises to the cytoplasm. It catalyses the reaction Thiol-dependent hydrolysis of ester, thioester, amide, peptide and isopeptide bonds formed by the C-terminal Gly of ubiquitin (a 76-residue protein attached to proteins as an intracellular targeting signal).. Hydrolase that can remove conjugated ubiquitin from proteins in vitro and may therefore play an important regulatory role at the level of protein turnover by preventing degradation. Binds chromatin (e.g. nucleosomes and histones) and has enzymatic histone deubiquitinase activity, specific for the H2B histone. Can both repress (e.g. OSR2) and promote (e.g. AN3) the expression of target genes by associating with chromatin, deubiquitinating H2B and regulating its euchromatic histone marks (e.g. H3ac and H3K4me). In association with LDL1/KDM1C, involved in transcriptional gene repression via histone deubiquitination and demethylation. Promotes the concerted epigenetic regulation and repression (e.g. the removal of euchromatic histone acetylation, ubiquitination, and methylation marks) of a set of genes (e.g. GA20OX, WUS, OSR2, ARL and ABI5) that collectively limit plant growth thus stimulating plant growth and increasing cell size. This is OVARIAN TUMOR DOMAIN-containing deubiquitinating enzyme 6 from Arabidopsis thaliana (Mouse-ear cress).